Consider the following 138-residue polypeptide: Large ribosomal subunit protein uL16 (138 aa).

Basic residues predominate over residues Met1–Gln13. Residues Met1–Gly24 are disordered.

The protein belongs to the universal ribosomal protein uL16 family. Part of the 50S ribosomal subunit.

In terms of biological role, binds 23S rRNA and is also seen to make contacts with the A and possibly P site tRNAs. This Burkholderia multivorans (strain ATCC 17616 / 249) protein is Large ribosomal subunit protein uL16.